Reading from the N-terminus, the 92-residue chain is Large ribosomal subunit protein bL27 (92 aa).

The segment at 1-21 is disordered; it reads MSKKKGVGSSRNGRDSESKRL. The span at 12–21 shows a compositional bias: basic and acidic residues; the sequence is NGRDSESKRL.

This sequence belongs to the bacterial ribosomal protein bL27 family.

The polypeptide is Large ribosomal subunit protein bL27 (Halothermothrix orenii (strain H 168 / OCM 544 / DSM 9562)).